Here is a 626-residue protein sequence, read N- to C-terminus: MTTPSHLSDRYELGEILGFGGMSEVHLARDLRLHRDVAVKVLRADLARDPSFYLRFRREAQNAAALNHPAIVAVYDTGEAETPAGPLPYIVMEYVDGVTLRDIVHTEGPMTPKRAIEVIADACQALNFSHQNGIIHRDVKPANIMISATNAVKVMDFGIARAIADSGNSVTQTAAVIGTAQYLSPEQARGDSVDARSDVYSLGCVLYEVLTGEPPFTGDSPVSVAYQHVREDPIPPSARHEGLSADLDAVVLKALAKNPENRYQTAAEMRADLVRVHNGEPPEAPKVLTDAERTSLLSSAAGNLSGPRTDPLPRQDLDDTDRDRSIGSVGRWVAVVAVLAVLTVVVTIAINTFGGITRDVQVPDVRGQSSADAIATLQNRGFKIRTLQKPDSTIPPDHVIGTDPAANTSVSAGDEITVNVSTGPEQREIPDVSTLTYAEAVKKLTAAGFGRFKQANSPSTPELVGKVIGTNPPANQTSAITNVVIIIVGSGPATKDIPDVAGQTVDVAQKNLNVYGFTKFSQASVDSPRPAGEVTGTNPPAGTTVPVDSVIELQVSKGNQFVMPDLSGMFWVDAEPRLRALGWTGMLDKGADVDAGGSQHNRVVYQNPPAGTGVNRDGIITLRFGQ.

Over 1-332 (MTTPSHLSDR…DRSIGSVGRW (332 aa)) the chain is Cytoplasmic. In terms of domain architecture, Protein kinase spans 11 to 274 (YELGEILGFG…TAAEMRADLV (264 aa)). ATP is bound by residues 17–25 (LGFGGMSEV), lysine 40, and 93–95 (EYV). The active-site Proton acceptor is the aspartate 138. Residues 140 to 143 (KPAN) and aspartate 156 contribute to the ATP site. Asparagine 143 and aspartate 156 together coordinate Mg(2+). A phosphoserine; by autocatalysis mark is found at serine 166 and serine 169. Threonine 171, threonine 173, and threonine 294 each carry phosphothreonine; by autocatalysis. At serine 295 the chain carries Phosphoserine; by autocatalysis. The segment at 299–323 (SAAGNLSGPRTDPLPRQDLDDTDRD) is disordered. Residue threonine 309 is modified to Phosphothreonine; by autocatalysis. The span at 311–323 (PLPRQDLDDTDRD) shows a compositional bias: basic and acidic residues. A helical membrane pass occupies residues 333–353 (VAVVAVLAVLTVVVTIAINTF). The Extracellular segment spans residues 354 to 626 (GGITRDVQVP…DGIITLRFGQ (273 aa)). PASTA domains lie at 356–422 (ITRD…NVST), 423–490 (GPEQ…IVGS), 491–557 (GPAT…QVSK), and 558–626 (GNQF…RFGQ).

It belongs to the protein kinase superfamily. Ser/Thr protein kinase family. As to quaternary structure, homodimer. In terms of processing, autophosphorylated. Dephosphorylated by PstP.

It is found in the cell membrane. It carries out the reaction L-seryl-[protein] + ATP = O-phospho-L-seryl-[protein] + ADP + H(+). It catalyses the reaction L-threonyl-[protein] + ATP = O-phospho-L-threonyl-[protein] + ADP + H(+). Its function is as follows. Protein kinase that regulates many aspects of mycobacterial physiology. Is a key component of a signal transduction pathway that regulates cell growth, cell shape and cell division via phosphorylation of target proteins. The polypeptide is Serine/threonine-protein kinase PknB (pknB) (Mycobacterium bovis (strain ATCC BAA-935 / AF2122/97)).